Here is a 76-residue protein sequence, read N- to C-terminus: Protein TraJ (76 aa).

It is found in the cytoplasm. This protein is essential for positively regulating the expression of transfer genes that are involved in the conjugal transfer of DNA between bacterial cells. The sequence is that of Protein TraJ (traJ) from Escherichia coli.